The following is a 463-amino-acid chain: ATP synthase subunit beta (463 aa).

153-160 (GGAGVGKT) contacts ATP.

It belongs to the ATPase alpha/beta chains family. In terms of assembly, F-type ATPases have 2 components, CF(1) - the catalytic core - and CF(0) - the membrane proton channel. CF(1) has five subunits: alpha(3), beta(3), gamma(1), delta(1), epsilon(1). CF(0) has three main subunits: a(1), b(2) and c(9-12). The alpha and beta chains form an alternating ring which encloses part of the gamma chain. CF(1) is attached to CF(0) by a central stalk formed by the gamma and epsilon chains, while a peripheral stalk is formed by the delta and b chains.

It is found in the cell inner membrane. It catalyses the reaction ATP + H2O + 4 H(+)(in) = ADP + phosphate + 5 H(+)(out). Produces ATP from ADP in the presence of a proton gradient across the membrane. The catalytic sites are hosted primarily by the beta subunits. The sequence is that of ATP synthase subunit beta from Burkholderia cepacia (Pseudomonas cepacia).